A 463-amino-acid chain; its full sequence is tRNA (guanine(37)-N(1))-methyltransferase (463 aa).

S-adenosyl-L-methionine is bound by residues His207, 245–246, 274–275, and Asn305; these read DL and DG.

It belongs to the class I-like SAM-binding methyltransferase superfamily. TRM5/TYW2 family. Monomer.

It localises to the mitochondrion matrix. The protein resides in the nucleus. The protein localises to the cytoplasm. It catalyses the reaction guanosine(37) in tRNA + S-adenosyl-L-methionine = N(1)-methylguanosine(37) in tRNA + S-adenosyl-L-homocysteine + H(+). Specifically methylates the N1 position of guanosine-37 in various cytoplasmic and mitochondrial tRNAs. Methylation is not dependent on the nature of the nucleoside 5' of the target nucleoside. This is the first step in the biosynthesis of wybutosine (yW), a modified base adjacent to the anticodon of tRNAs and required for accurate decoding. The protein is tRNA (guanine(37)-N(1))-methyltransferase of Pediculus humanus subsp. corporis (Body louse).